Reading from the N-terminus, the 158-residue chain is RNA pyrophosphohydrolase (158 aa).

Positions 6–150 (GYRLNVGIVL…KRDVYRKVMQ (145 aa)) constitute a Nudix hydrolase domain. A Nudix box motif is present at residues 39-60 (GGINIGETPEQAMYRELFEEIG).

Belongs to the Nudix hydrolase family. RppH subfamily. Requires a divalent metal cation as cofactor.

In terms of biological role, accelerates the degradation of transcripts by removing pyrophosphate from the 5'-end of triphosphorylated RNA, leading to a more labile monophosphorylated state that can stimulate subsequent ribonuclease cleavage. In Blochmanniella pennsylvanica (strain BPEN), this protein is RNA pyrophosphohydrolase.